A 147-amino-acid polypeptide reads, in one-letter code: MERVNNYKLCVALLIMSVMMAMAAAQSATNVRSTYHLYNPQNINWDLRAASAFCATWDADKPLAWRQKYGWTAFCGPAGPRGQDSCGRCLRVTNTGTGTQATVRIVDQCSNGGLDLDVNVFNQLDTNGLGYQQGHLIVNYEFVNCND.

An N-terminal signal peptide occupies residues 1–25 (MERVNNYKLCVALLIMSVMMAMAAA). The Barwin domain maps to 26–147 (QSATNVRSTY…VNYEFVNCND (122 aa)). 3 disulfides stabilise this stretch: C54–C86, C75–C109, and C89–C145.

The protein resides in the secreted. It is found in the cell wall. The sequence is that of Pathogenesis-related protein PR-4B from Nicotiana tabacum (Common tobacco).